The sequence spans 270 residues: tRNA pseudouridine synthase A (270 aa).

The Nucleophile role is filled by aspartate 60. The tract at residues 107-111 (FHARF) is RNA binding. Tyrosine 118 serves as a coordination point for substrate. The segment at 168–172 (QCQSR) is interaction with tRNA.

It belongs to the tRNA pseudouridine synthase TruA family. As to quaternary structure, homodimer.

The enzyme catalyses uridine(38/39/40) in tRNA = pseudouridine(38/39/40) in tRNA. Formation of pseudouridine at positions 38, 39 and 40 in the anticodon stem and loop of transfer RNAs. This is tRNA pseudouridine synthase A from Shigella boydii serotype 4 (strain Sb227).